The primary structure comprises 679 residues: Penicillin-binding protein PbpB (679 aa).

Residues methionine 1–valine 74 are disordered. Topologically, residues methionine 1 to threonine 90 are cytoplasmic. The span at alanine 42 to alanine 54 shows a compositional bias: polar residues. Residues glycine 91–valine 111 form a helical membrane-spanning segment. Topologically, residues serine 112–threonine 679 are extracellular. Residue serine 386 is the Acyl-ester intermediate of the active site.

This sequence belongs to the transpeptidase family. As to quaternary structure, interacts with Wag31. Post-translationally, cleaved by Rip1 in response to oxidative stress (H(2)O(2)), prevented by Wag31. Cleavage probably occurs near residues 102-103.

It localises to the cell membrane. It participates in cell wall biogenesis; peptidoglycan biosynthesis. Its function is as follows. Synthesis of cross-linked peptidoglycan from the lipid intermediates. The polypeptide is Penicillin-binding protein PbpB (pbpB) (Mycobacterium tuberculosis (strain ATCC 25618 / H37Rv)).